The chain runs to 669 residues: UvrABC system protein C (669 aa).

The region spanning 16 to 95 (TNPGVYRFRD…IKEFKPRFNV (80 aa)) is the GIY-YIG domain. The region spanning 207–242 (KRFIGRLEKDMAAAVAELDYERAARVRDDIIALRKV) is the UVR domain.

It belongs to the UvrC family. In terms of assembly, interacts with UvrB in an incision complex.

The protein localises to the cytoplasm. Functionally, the UvrABC repair system catalyzes the recognition and processing of DNA lesions. UvrC both incises the 5' and 3' sides of the lesion. The N-terminal half is responsible for the 3' incision and the C-terminal half is responsible for the 5' incision. The chain is UvrABC system protein C from Arthrobacter sp. (strain FB24).